The primary structure comprises 156 residues: Small ribosomal subunit protein uS7 (156 aa).

The protein belongs to the universal ribosomal protein uS7 family. In terms of assembly, part of the 30S ribosomal subunit. Contacts proteins S9 and S11.

Its function is as follows. One of the primary rRNA binding proteins, it binds directly to 16S rRNA where it nucleates assembly of the head domain of the 30S subunit. Is located at the subunit interface close to the decoding center, probably blocks exit of the E-site tRNA. The sequence is that of Small ribosomal subunit protein uS7 from Mycobacteroides abscessus (strain ATCC 19977 / DSM 44196 / CCUG 20993 / CIP 104536 / JCM 13569 / NCTC 13031 / TMC 1543 / L948) (Mycobacterium abscessus).